The following is a 163-amino-acid chain: Deoxyuridine 5'-triphosphate nucleotidohydrolase (163 aa).

This sequence belongs to the dUTPase family. The cofactor is Mg(2+).

It carries out the reaction dUTP + H2O = dUMP + diphosphate + H(+). Its pathway is pyrimidine metabolism; dUMP biosynthesis; dUMP from dCTP (dUTP route): step 2/2. This enzyme is involved in nucleotide metabolism: it produces dUMP, the immediate precursor of thymidine nucleotides and it decreases the intracellular concentration of dUTP so that uracil cannot be incorporated into DNA. The protein is Deoxyuridine 5'-triphosphate nucleotidohydrolase of Galliformes (FAdV-8).